A 436-amino-acid polypeptide reads, in one-letter code: 3-ketoacyl-CoA thiolase (436 aa).

The Acyl-thioester intermediate role is filled by cysteine 99. Residues histidine 392 and cysteine 422 each act as proton acceptor in the active site.

Belongs to the thiolase-like superfamily. Thiolase family. In terms of assembly, heterotetramer of two alpha chains (FadJ) and two beta chains (FadI).

The protein localises to the cytoplasm. The catalysed reaction is an acyl-CoA + acetyl-CoA = a 3-oxoacyl-CoA + CoA. It functions in the pathway lipid metabolism; fatty acid beta-oxidation. Functionally, catalyzes the final step of fatty acid oxidation in which acetyl-CoA is released and the CoA ester of a fatty acid two carbons shorter is formed. The polypeptide is 3-ketoacyl-CoA thiolase (Photobacterium profundum (strain SS9)).